Reading from the N-terminus, the 75-residue chain is Cytochrome c oxidase subunit 6C (75 aa).

Residues 1-13 (MAPEVLPKPRMRG) are Mitochondrial matrix-facing. Residues 14 to 54 (LLARRLRNHMAVAFVLSLGVAALYKFRVADQRKKAYADFYR) traverse the membrane as a helical segment. Topologically, residues 55 to 75 (NYDVMKDFEEMRKAGIFQSVK) are mitochondrial intermembrane.

This sequence belongs to the cytochrome c oxidase subunit 6c family. In terms of assembly, component of the cytochrome c oxidase (complex IV, CIV), a multisubunit enzyme composed of 14 subunits. The complex is composed of a catalytic core of 3 subunits MT-CO1, MT-CO2 and MT-CO3, encoded in the mitochondrial DNA, and 11 supernumerary subunits COX4I1 (or COX4I2), COX5A, COX5B, COX6A1 (or COX6A2), COX6B1 (or COX6B2), COX6C, COX7A2 (or COX7A1), COX7B, COX7C, COX8A and NDUFA4, which are encoded in the nuclear genome. The complex exists as a monomer or a dimer and forms supercomplexes (SCs) in the inner mitochondrial membrane with NADH-ubiquinone oxidoreductase (complex I, CI) and ubiquinol-cytochrome c oxidoreductase (cytochrome b-c1 complex, complex III, CIII), resulting in different assemblies (supercomplex SCI(1)III(2)IV(1) and megacomplex MCI(2)III(2)IV(2)).

Its subcellular location is the mitochondrion inner membrane. The protein operates within energy metabolism; oxidative phosphorylation. Functionally, component of the cytochrome c oxidase, the last enzyme in the mitochondrial electron transport chain which drives oxidative phosphorylation. The respiratory chain contains 3 multisubunit complexes succinate dehydrogenase (complex II, CII), ubiquinol-cytochrome c oxidoreductase (cytochrome b-c1 complex, complex III, CIII) and cytochrome c oxidase (complex IV, CIV), that cooperate to transfer electrons derived from NADH and succinate to molecular oxygen, creating an electrochemical gradient over the inner membrane that drives transmembrane transport and the ATP synthase. Cytochrome c oxidase is the component of the respiratory chain that catalyzes the reduction of oxygen to water. Electrons originating from reduced cytochrome c in the intermembrane space (IMS) are transferred via the dinuclear copper A center (CU(A)) of subunit 2 and heme A of subunit 1 to the active site in subunit 1, a binuclear center (BNC) formed by heme A3 and copper B (CU(B)). The BNC reduces molecular oxygen to 2 water molecules using 4 electrons from cytochrome c in the IMS and 4 protons from the mitochondrial matrix. The sequence is that of Cytochrome c oxidase subunit 6C (COX6C) from Homo sapiens (Human).